The primary structure comprises 102 residues: NADH-quinone oxidoreductase subunit K (102 aa).

The next 3 helical transmembrane spans lie at 5–25 (LGHF…GIFL), 31–51 (IVLL…FVAF), and 62–82 (IFVF…LALL).

Belongs to the complex I subunit 4L family. As to quaternary structure, NDH-1 is composed of 14 different subunits. Subunits NuoA, H, J, K, L, M, N constitute the membrane sector of the complex.

It is found in the cell inner membrane. It catalyses the reaction a quinone + NADH + 5 H(+)(in) = a quinol + NAD(+) + 4 H(+)(out). Functionally, NDH-1 shuttles electrons from NADH, via FMN and iron-sulfur (Fe-S) centers, to quinones in the respiratory chain. The immediate electron acceptor for the enzyme in this species is believed to be ubiquinone. Couples the redox reaction to proton translocation (for every two electrons transferred, four hydrogen ions are translocated across the cytoplasmic membrane), and thus conserves the redox energy in a proton gradient. This Variovorax paradoxus (strain S110) protein is NADH-quinone oxidoreductase subunit K.